Reading from the N-terminus, the 360-residue chain is Phosphoserine aminotransferase (360 aa).

L-glutamate is bound at residue Arg-42. Residues 76–77 (AR), Trp-102, Thr-153, Asp-172, and Gln-195 each bind pyridoxal 5'-phosphate. Position 196 is an N6-(pyridoxal phosphate)lysine (Lys-196). 237–238 (NT) is a binding site for pyridoxal 5'-phosphate.

This sequence belongs to the class-V pyridoxal-phosphate-dependent aminotransferase family. SerC subfamily. Homodimer. The cofactor is pyridoxal 5'-phosphate.

The protein localises to the cytoplasm. The catalysed reaction is O-phospho-L-serine + 2-oxoglutarate = 3-phosphooxypyruvate + L-glutamate. It catalyses the reaction 4-(phosphooxy)-L-threonine + 2-oxoglutarate = (R)-3-hydroxy-2-oxo-4-phosphooxybutanoate + L-glutamate. It functions in the pathway amino-acid biosynthesis; L-serine biosynthesis; L-serine from 3-phospho-D-glycerate: step 2/3. Its pathway is cofactor biosynthesis; pyridoxine 5'-phosphate biosynthesis; pyridoxine 5'-phosphate from D-erythrose 4-phosphate: step 3/5. Functionally, catalyzes the reversible conversion of 3-phosphohydroxypyruvate to phosphoserine and of 3-hydroxy-2-oxo-4-phosphonooxybutanoate to phosphohydroxythreonine. This is Phosphoserine aminotransferase from Aliivibrio fischeri (strain ATCC 700601 / ES114) (Vibrio fischeri).